Here is a 283-residue protein sequence, read N- to C-terminus: Tryptophan 2,3-dioxygenase (283 aa).

Substrate contacts are provided by residues 52–56 (FIIQH), Y114, and R118. H241 is a heme binding site. T255 contributes to the substrate binding site.

It belongs to the tryptophan 2,3-dioxygenase family. In terms of assembly, homotetramer. Heme serves as cofactor.

It carries out the reaction L-tryptophan + O2 = N-formyl-L-kynurenine. It participates in amino-acid degradation; L-tryptophan degradation via kynurenine pathway; L-kynurenine from L-tryptophan: step 1/2. Functionally, heme-dependent dioxygenase that catalyzes the oxidative cleavage of the L-tryptophan (L-Trp) pyrrole ring and converts L-tryptophan to N-formyl-L-kynurenine. Catalyzes the oxidative cleavage of the indole moiety. The chain is Tryptophan 2,3-dioxygenase from Pseudomonas fluorescens (strain ATCC BAA-477 / NRRL B-23932 / Pf-5).